The primary structure comprises 303 residues: Agmatinase (303 aa).

Mn(2+) is bound by residues histidine 126, aspartate 149, histidine 151, aspartate 153, aspartate 230, and aspartate 232.

This sequence belongs to the arginase family. Agmatinase subfamily. Mn(2+) serves as cofactor.

The catalysed reaction is agmatine + H2O = urea + putrescine. Catalyzes the formation of putrescine from agmatine. The polypeptide is Agmatinase (speB) (Blochmanniella floridana).